Consider the following 94-residue polypeptide: Co-chaperonin GroES (94 aa).

It belongs to the GroES chaperonin family. In terms of assembly, heptamer of 7 subunits arranged in a ring. Interacts with the chaperonin GroEL.

Its subcellular location is the cytoplasm. Together with the chaperonin GroEL, plays an essential role in assisting protein folding. The GroEL-GroES system forms a nano-cage that allows encapsulation of the non-native substrate proteins and provides a physical environment optimized to promote and accelerate protein folding. GroES binds to the apical surface of the GroEL ring, thereby capping the opening of the GroEL channel. This chain is Co-chaperonin GroES, found in Lactobacillus helveticus (strain DPC 4571).